The chain runs to 358 residues: Carbohydrate sulfotransferase 10 (358 aa).

The Cytoplasmic portion of the chain corresponds to methionine 1–leucine 6. A helical; Signal-anchor for type II membrane protein membrane pass occupies residues leucine 7–leucine 27. Residues threonine 28–asparagine 358 lie on the Lumenal side of the membrane. Asparagine 101 carries N-linked (GlcNAc...) asparagine glycosylation. 3'-phosphoadenylyl sulfate-binding positions include proline 129–glutamine 135 and arginine 191–serine 199. Asparagine 318 is a glycosylation site (N-linked (GlcNAc...) asparagine).

The protein belongs to the sulfotransferase 2 family. Predominantly expressed in hypertrophic, prehypertrophic and proliferative chondrocytes at E12 but is down-regulated in epiphyseal chondrocytes.

The protein localises to the golgi apparatus membrane. Functionally, catalyzes the transfer of sulfate to position 3 of terminal glucuronic acid of both protein- and lipid-linked oligosaccharides. Participates in biosynthesis of HNK-1 carbohydrate structure, a sulfated glucuronyl-lactosaminyl residue carried by many neural recognition molecules, which is involved in cell interactions during ontogenetic development and in synaptic plasticity in the adult. In Gallus gallus (Chicken), this protein is Carbohydrate sulfotransferase 10 (CHST10).